Consider the following 606-residue polypeptide: Scavenger receptor class A member 3 (606 aa).

Over 1-56 (MKVRSAGGDGDALCVTEEDLAGDDEDMPTFPCTQKGRPGPRCSRCQKNLSLHTSVR) the chain is Cytoplasmic. Residues 57–77 (ILYLFLALLLVAVAVLASLVF) traverse the membrane as a helical; Signal-anchor for type II membrane protein segment. Over 78–606 (RKVDSLSEDI…PGPPGSQSFY (529 aa)) the chain is Extracellular. Residues asparagine 115, asparagine 182, asparagine 224, asparagine 257, asparagine 313, asparagine 337, asparagine 365, asparagine 400, asparagine 430, and asparagine 451 are each glycosylated (N-linked (GlcNAc...) asparagine). The tract at residues 454-606 (ILRGAPGPPG…PGPPGSQSFY (153 aa)) is disordered. In terms of domain architecture, Collagen-like 1 spans 455–513 (LRGAPGPPGPRGFKGDMGVKGPVGGRGPKGDPGSLGPLGPQGPQGQPGEAGPVGERGPV). The span at 485-519 (DPGSLGPLGPQGPQGQPGEAGPVGERGPVGPRGFP) shows a compositional bias: low complexity. The segment covering 526–535 (GSFGTGGPRG) has biased composition (gly residues). Positions 544 to 603 (GPPGPEGPPGSPGPSGPQGKPGIAGKTGSPGQRGAMGPKGEPGIQGPPGLPGPPGPPGSQ) constitute a Collagen-like 2 domain. Pro residues-rich tracts occupy residues 545–558 (PPGP…PGPS) and 591–600 (PGLPGPPGPP).

In terms of tissue distribution, expressed ubiquitously.

It is found in the endoplasmic reticulum membrane. Its subcellular location is the golgi apparatus membrane. Functionally, seems to protect cells by scavenging oxidative molecules or harmful products of oxidation. This is Scavenger receptor class A member 3 (SCARA3) from Homo sapiens (Human).